We begin with the raw amino-acid sequence, 276 residues long: Shikimate dehydrogenase (NADP(+)) (276 aa).

Residues 20-22 (SRS) and threonine 67 contribute to the shikimate site. Lysine 71 serves as the catalytic Proton acceptor. NADP(+) is bound at residue aspartate 83. Shikimate is bound by residues asparagine 92 and aspartate 107. NADP(+)-binding positions include 131–135 (GAGGA) and isoleucine 217. Position 219 (tyrosine 219) interacts with shikimate. Glycine 240 provides a ligand contact to NADP(+).

Belongs to the shikimate dehydrogenase family. As to quaternary structure, homodimer.

It carries out the reaction shikimate + NADP(+) = 3-dehydroshikimate + NADPH + H(+). The protein operates within metabolic intermediate biosynthesis; chorismate biosynthesis; chorismate from D-erythrose 4-phosphate and phosphoenolpyruvate: step 4/7. In terms of biological role, involved in the biosynthesis of the chorismate, which leads to the biosynthesis of aromatic amino acids. Catalyzes the reversible NADPH linked reduction of 3-dehydroshikimate (DHSA) to yield shikimate (SA). This Acidiphilium cryptum (strain JF-5) protein is Shikimate dehydrogenase (NADP(+)).